The sequence spans 273 residues: Nitrogenase iron protein (273 aa).

An ATP-binding site is contributed by 8 to 15 (GKGGIGKS). Residue cysteine 95 coordinates [4Fe-4S] cluster. Arginine 98 bears the ADP-ribosylarginine; by dinitrogenase reductase ADP-ribosyltransferase mark. [4Fe-4S] cluster is bound at residue cysteine 130.

Belongs to the NifH/BchL/ChlL family. Homodimer. It depends on [4Fe-4S] cluster as a cofactor. In terms of processing, the reversible ADP-ribosylation of Arg-98 inactivates the nitrogenase reductase and regulates nitrogenase activity.

It catalyses the reaction N2 + 8 reduced [2Fe-2S]-[ferredoxin] + 16 ATP + 16 H2O = H2 + 8 oxidized [2Fe-2S]-[ferredoxin] + 2 NH4(+) + 16 ADP + 16 phosphate + 6 H(+). The key enzymatic reactions in nitrogen fixation are catalyzed by the nitrogenase complex, which has 2 components: the iron protein and the molybdenum-iron protein. In Roseiflexus castenholzii (strain DSM 13941 / HLO8), this protein is Nitrogenase iron protein.